The sequence spans 865 residues: LINE-1 type transposase domain-containing protein 1 (865 aa).

N-acetylserine is present on S2. The residue at position 2 (S2) is a Phosphoserine. At T149 the chain carries Phosphothreonine. S154 bears the Phosphoserine mark. Residues 370 to 508 (EMKNLETQEE…EKKASRRQKE (139 aa)) form a disordered region. 2 stretches are compositionally biased toward acidic residues: residues 376-440 (TQEE…EQTS) and 472-483 (SVEDSESEEEEE). Phosphoserine occurs at positions 472, 476, and 478. The segment covering 498–508 (TEKKASRRQKE) has biased composition (basic and acidic residues). 3 positions are modified to phosphoserine: S518, S561, and S573. The segment covering 590–608 (EEKKHRTLHTEELTSKEAD) has biased composition (basic and acidic residues). The tract at residues 590-612 (EEKKHRTLHTEELTSKEADLTEE) is disordered. A phosphoserine mark is found at S640, S648, and S665. Positions 642–684 (VLEIENSVDDLSSRMDILEERIDSLEDQIEEFSKDTMQMTKQI) form a coiled coil.

This sequence belongs to the transposase 22 family.

In Homo sapiens (Human), this protein is LINE-1 type transposase domain-containing protein 1 (L1TD1).